We begin with the raw amino-acid sequence, 347 residues long: Phosphate acyltransferase (347 aa).

It belongs to the PlsX family. As to quaternary structure, homodimer. Probably interacts with PlsY.

Its subcellular location is the cytoplasm. It carries out the reaction a fatty acyl-[ACP] + phosphate = an acyl phosphate + holo-[ACP]. Its pathway is lipid metabolism; phospholipid metabolism. Its function is as follows. Catalyzes the reversible formation of acyl-phosphate (acyl-PO(4)) from acyl-[acyl-carrier-protein] (acyl-ACP). This enzyme utilizes acyl-ACP as fatty acyl donor, but not acyl-CoA. This is Phosphate acyltransferase from Oleidesulfovibrio alaskensis (strain ATCC BAA-1058 / DSM 17464 / G20) (Desulfovibrio alaskensis).